Here is a 365-residue protein sequence, read N- to C-terminus: MNVLEISAQTLRNNIRIIKEYVGSAKICFPVKANAYGHGLELIVEHSHDLVDFFAVANVLEAFRVLDVVEKPVMIFGVIEYNYIDRILSKNIRVSIQDYNDIEKLEKFAKYYNKKPFVHVNLNTGMNRMGVDYNDACRTIQRAYESDWLILEGVYSHLACADNRDHPTNIKQKNRFDSIVEFTKGLSQDIICHLSNSYGFLGQKGICYDMVRPGILSYGFLPEFYVDRVIREIKPIARLLSKVVKIITLQEGEGVGYSLIYRGFEGEQLAVIPIGYGDGFPRELGDRGFVNINDVMYPMAGRMSMDGLTVSLGINEYDVKVSDTVELISAIPRNRNSAFSIAKQTNTIEYDIMSTLNDRIIRKII.

The active-site Proton acceptor; specific for D-alanine is the Lys32. Lys32 carries the N6-(pyridoxal phosphate)lysine modification. Arg128 contacts substrate. The active-site Proton acceptor; specific for L-alanine is Tyr257. Met305 provides a ligand contact to substrate.

The protein belongs to the alanine racemase family. It depends on pyridoxal 5'-phosphate as a cofactor.

The enzyme catalyses L-alanine = D-alanine. The protein operates within amino-acid biosynthesis; D-alanine biosynthesis; D-alanine from L-alanine: step 1/1. Its function is as follows. Catalyzes the interconversion of L-alanine and D-alanine. May also act on other amino acids. The chain is Alanine racemase (alr) from Francisella tularensis subsp. novicida (strain U112).